We begin with the raw amino-acid sequence, 118 residues long: Beta-elicitin cryptogein (118 aa).

Residues 1–20 form the signal peptide; sequence MNFTALLAAVAAALVGSANA. 3 disulfides stabilise this stretch: C23–C91, C47–C76, and C71–C115.

Belongs to the elicitin family.

Its subcellular location is the secreted. Induces local and distal defense responses (incompatible hypersensitive reaction) in plants from the solanaceae and cruciferae families. Elicits leaf necrosis and causes the accumulation of pathogenesis-related proteins. Might interact with the lipidic molecules of the plasma membrane. This is Beta-elicitin cryptogein from Phytophthora cryptogea.